The chain runs to 223 residues: Adenylate kinase 4, mitochondrial (223 aa).

A ribonucleoside 5'-triphosphate is bound at residue 15–20 (GSGKGT). The tract at residues 35–64 (SSGHFLRENIKASTEVGEMAKQYIEKSLLV) is NMP. AMP is bound by residues S36 and R41. Position 60 is an N6-succinyllysine (K60). AMP contacts are provided by residues 62-64 (LLV), 89-92 (GFPR), and Q96. The LID stretch occupies residues 125 to 162 (RRWIHPPSGRVYNLDFNPPHVHGIDDVTGEPLVQQEDD). Residues R126 and 135–136 (VY) contribute to the a ribonucleoside 5'-triphosphate site. Position 170 (R170) interacts with AMP. K175 carries the N6-acetyllysine modification. 2 positions are modified to N6-acetyllysine; alternate: K179 and K186. 2 positions are modified to N6-succinyllysine; alternate: K179 and K186. Residue T199 coordinates a ribonucleoside 5'-triphosphate.

Belongs to the adenylate kinase family. AK3 subfamily. In terms of assembly, monomer. Interacts with SLC25A5/ANT2. In terms of tissue distribution, highly expressed in kidney, moderately expressed in heart and liver and weakly expressed in brain.

Its subcellular location is the mitochondrion matrix. It carries out the reaction a ribonucleoside 5'-phosphate + ATP = a ribonucleoside 5'-diphosphate + ADP. It catalyses the reaction AMP + ATP = 2 ADP. The catalysed reaction is GTP + AMP = GDP + ADP. The enzyme catalyses CMP + ATP = CDP + ADP. It carries out the reaction GTP + CMP = CDP + GDP. It catalyses the reaction dAMP + ATP = dADP + ADP. The catalysed reaction is dCMP + ATP = dCDP + ADP. The enzyme catalyses a 2'-deoxyribonucleoside 5'-diphosphate + ATP = a 2'-deoxyribonucleoside 5'-triphosphate + ADP. It carries out the reaction a ribonucleoside 5'-diphosphate + ATP = a ribonucleoside 5'-triphosphate + ADP. It catalyses the reaction GDP + ATP = GTP + ADP. The catalysed reaction is CDP + GTP = CTP + GDP. The enzyme catalyses CDP + ATP = CTP + ADP. It carries out the reaction UDP + ATP = UTP + ADP. It catalyses the reaction GTP + UDP = UTP + GDP. The catalysed reaction is dADP + GTP = dATP + GDP. The enzyme catalyses dCDP + GTP = dCTP + GDP. It carries out the reaction dCDP + ATP = dCTP + ADP. It catalyses the reaction dGDP + ATP = dGTP + ADP. The catalysed reaction is dTDP + GTP = dTTP + GDP. The enzyme catalyses dTDP + ATP = dTTP + ADP. In terms of biological role, broad-specificity mitochondrial nucleoside phosphate kinase involved in cellular nucleotide homeostasis by catalyzing nucleoside-phosphate interconversions. Similar to other adenylate kinases, preferentially catalyzes the phosphorylation of the nucleoside monophosphate AMP with ATP as phosphate donor to produce ADP. Phosphorylates only AMP when using GTP as phosphate donor. In vitro, can also catalyze the phosphorylation of CMP, dAMP and dCMP and use GTP as an alternate phosphate donor. Moreover, exhibits a diphosphate kinase activity, producing ATP, CTP, GTP, UTP, TTP, dATP, dCTP and dGTP from the corresponding diphosphate substrates with either ATP or GTP as phosphate donors. Plays a role in controlling cellular ATP levels by regulating phosphorylation and activation of the energy sensor protein kinase AMPK. Plays a protective role in the cellular response to oxidative stress. The chain is Adenylate kinase 4, mitochondrial from Homo sapiens (Human).